Reading from the N-terminus, the 100-residue chain is Ubiquitin-related modifier 1 homolog (100 aa).

Gly-100 bears the 1-thioglycine mark. Gly-100 participates in a covalent cross-link: Glycyl lysine isopeptide (Gly-Lys) (interchain with K-? in acceptor proteins).

The protein belongs to the URM1 family. Interacts with cer. In terms of processing, C-terminal thiocarboxylation occurs in 2 steps, it is first acyl-adenylated (-COAMP) via the hesA/moeB/thiF part of the MOCS3 homolog, then thiocarboxylated (-COSH) via the rhodanese domain of the MOCS3 homolog.

Its subcellular location is the cytoplasm. It functions in the pathway tRNA modification; 5-methoxycarbonylmethyl-2-thiouridine-tRNA biosynthesis. Its function is as follows. Acts as a sulfur carrier required for 2-thiolation of mcm(5)S(2)U at tRNA wobble positions of cytosolic tRNA(Lys), tRNA(Glu) and tRNA(Gln). Serves as sulfur donor in tRNA 2-thiolation reaction by being thiocarboxylated (-COSH) at its C-terminus by MOCS3. The sulfur is then transferred to tRNA to form 2-thiolation of mcm(5)S(2)U. Also acts as a ubiquitin-like protein (UBL) that is covalently conjugated via an isopeptide bond to lysine residues of target proteins such as Prx2/Jafrac1, Ciao1, Eip71CD and GILT1. The thiocarboxylated form serves as substrate for conjugation and oxidative stress specifically induces the formation of UBL-protein conjugates. This chain is Ubiquitin-related modifier 1 homolog, found in Drosophila willistoni (Fruit fly).